The sequence spans 68 residues: Acylphosphatase (68 aa).

The 66-residue stretch at 3-68 (RIACTVHGRV…RCTAGLPSAP (66 aa)) folds into the Acylphosphatase-like domain. Active-site residues include arginine 18 and asparagine 36.

It belongs to the acylphosphatase family.

It carries out the reaction an acyl phosphate + H2O = a carboxylate + phosphate + H(+). The sequence is that of Acylphosphatase (acyP) from Oleidesulfovibrio alaskensis (strain ATCC BAA-1058 / DSM 17464 / G20) (Desulfovibrio alaskensis).